We begin with the raw amino-acid sequence, 144 residues long: Small ribosomal subunit protein bS6 (144 aa).

Residues 97–144 (DTEQSLIMKSKDEKGDKPERSERRRRDDEEGDAAPAATDTDGDNAEAA) form a disordered region. Residues 105–124 (KSKDEKGDKPERSERRRRDD) show a composition bias toward basic and acidic residues.

It belongs to the bacterial ribosomal protein bS6 family.

Functionally, binds together with bS18 to 16S ribosomal RNA. In Xanthomonas campestris pv. campestris (strain 8004), this protein is Small ribosomal subunit protein bS6.